Consider the following 256-residue polypeptide: Imidazole glycerol phosphate synthase subunit hisF1 (256 aa).

Catalysis depends on residues aspartate 11 and aspartate 130.

It belongs to the HisA/HisF family. Heterodimer of HisH and HisF.

It is found in the cytoplasm. The catalysed reaction is 5-[(5-phospho-1-deoxy-D-ribulos-1-ylimino)methylamino]-1-(5-phospho-beta-D-ribosyl)imidazole-4-carboxamide + L-glutamine = D-erythro-1-(imidazol-4-yl)glycerol 3-phosphate + 5-amino-1-(5-phospho-beta-D-ribosyl)imidazole-4-carboxamide + L-glutamate + H(+). Its pathway is amino-acid biosynthesis; L-histidine biosynthesis; L-histidine from 5-phospho-alpha-D-ribose 1-diphosphate: step 5/9. Its function is as follows. IGPS catalyzes the conversion of PRFAR and glutamine to IGP, AICAR and glutamate. The HisF subunit catalyzes the cyclization activity that produces IGP and AICAR from PRFAR using the ammonia provided by the HisH subunit. This chain is Imidazole glycerol phosphate synthase subunit hisF1 (hisF1), found in Parasynechococcus marenigrum (strain WH8102).